Consider the following 116-residue polypeptide: uncharacterized protein (116 aa).

This sequence belongs to the mimivirus L15/L51/R83 family.

This is an uncharacterized protein from Acanthamoeba polyphaga mimivirus (APMV).